Reading from the N-terminus, the 275-residue chain is 2,3,4,5-tetrahydropyridine-2,6-dicarboxylate N-succinyltransferase (275 aa).

The substrate site is built by Arg108 and Asp145.

This sequence belongs to the transferase hexapeptide repeat family. In terms of assembly, homotrimer.

The protein localises to the cytoplasm. It carries out the reaction (S)-2,3,4,5-tetrahydrodipicolinate + succinyl-CoA + H2O = (S)-2-succinylamino-6-oxoheptanedioate + CoA. It functions in the pathway amino-acid biosynthesis; L-lysine biosynthesis via DAP pathway; LL-2,6-diaminopimelate from (S)-tetrahydrodipicolinate (succinylase route): step 1/3. In Jannaschia sp. (strain CCS1), this protein is 2,3,4,5-tetrahydropyridine-2,6-dicarboxylate N-succinyltransferase.